The primary structure comprises 600 residues: Aspartate--tRNA(Asp/Asn) ligase (600 aa).

Glu-175 contributes to the L-aspartate binding site. The segment at 199–202 (QLFK) is aspartate. Arg-221 contacts L-aspartate. ATP is bound by residues 221–223 (RDE) and Gln-230. An L-aspartate-binding site is contributed by His-453. Glu-487 contacts ATP. Arg-494 provides a ligand contact to L-aspartate. 539-542 (GWDR) provides a ligand contact to ATP. The disordered stretch occupies residues 578–600 (AAQRKESGIDFKPKKGPQGQKEK). Residues 580–590 (QRKESGIDFKP) are compositionally biased toward basic and acidic residues.

Belongs to the class-II aminoacyl-tRNA synthetase family. Type 1 subfamily. Homodimer.

Its subcellular location is the cytoplasm. It catalyses the reaction tRNA(Asx) + L-aspartate + ATP = L-aspartyl-tRNA(Asx) + AMP + diphosphate. In terms of biological role, aspartyl-tRNA synthetase with relaxed tRNA specificity since it is able to aspartylate not only its cognate tRNA(Asp) but also tRNA(Asn). Reaction proceeds in two steps: L-aspartate is first activated by ATP to form Asp-AMP and then transferred to the acceptor end of tRNA(Asp/Asn). The polypeptide is Aspartate--tRNA(Asp/Asn) ligase (Corynebacterium jeikeium (strain K411)).